Reading from the N-terminus, the 498-residue chain is Argininosuccinate lyase 1 (498 aa).

Belongs to the lyase 1 family. Argininosuccinate lyase subfamily.

The protein localises to the cytoplasm. The catalysed reaction is 2-(N(omega)-L-arginino)succinate = fumarate + L-arginine. It participates in amino-acid biosynthesis; L-arginine biosynthesis; L-arginine from L-ornithine and carbamoyl phosphate: step 3/3. The chain is Argininosuccinate lyase 1 from Shouchella clausii (strain KSM-K16) (Alkalihalobacillus clausii).